A 292-amino-acid chain; its full sequence is uncharacterized protein (292 aa).

Positions 1-213 (MTTAITPDKK…DQDDDDQKDL (213 aa)) are disordered. 2 stretches are compositionally biased toward basic residues: residues 27–43 (TKPR…KSKK) and 50–78 (AKKR…KKAP). Over residues 90 to 100 (QQAQASLQKPI) the composition is skewed to polar residues. Positions 116–134 (PRPPTPIPPTGVKPEPAPR) are enriched in pro residues. The segment covering 143–158 (SVSSTTPRTSATTGTT) has biased composition (low complexity).

This is an uncharacterized protein from Caenorhabditis elegans.